We begin with the raw amino-acid sequence, 322 residues long: Prephenate dehydratase (322 aa).

A Prephenate dehydratase domain is found at 5–191 (RIAYLGPEGT…ARTRFVLVGM (187 aa)). An ACT domain is found at 205–282 (SAVLRIDNAP…ADVCYLGSWP (78 aa)). Residues 286-322 (ATGPTVSPPPPDEASRWLARLRAGKPDQASEPGGGKL) are disordered.

In terms of assembly, homodimer.

It carries out the reaction prephenate + H(+) = 3-phenylpyruvate + CO2 + H2O. The protein operates within amino-acid biosynthesis; L-phenylalanine biosynthesis; phenylpyruvate from prephenate: step 1/1. The sequence is that of Prephenate dehydratase (pheA) from Mycobacterium leprae (strain Br4923).